Reading from the N-terminus, the 106-residue chain is uncharacterized protein (106 aa).

This is an uncharacterized protein from Archaeoglobus fulgidus (strain ATCC 49558 / DSM 4304 / JCM 9628 / NBRC 100126 / VC-16).